Here is a 405-residue protein sequence, read N- to C-terminus: Argininosuccinate synthase (405 aa).

ATP contacts are provided by residues Ala-10–Ser-18 and Ala-37. L-citrulline is bound by residues Tyr-90 and Ser-95. Position 120 (Gly-120) interacts with ATP. L-aspartate is bound by residues Thr-122, Asn-126, and Asp-127. Position 126 (Asn-126) interacts with L-citrulline. Arg-130, Ser-181, Ser-190, Glu-266, and Tyr-278 together coordinate L-citrulline.

The protein belongs to the argininosuccinate synthase family. Type 1 subfamily. Homotetramer.

The protein resides in the cytoplasm. The catalysed reaction is L-citrulline + L-aspartate + ATP = 2-(N(omega)-L-arginino)succinate + AMP + diphosphate + H(+). Its pathway is amino-acid biosynthesis; L-arginine biosynthesis; L-arginine from L-ornithine and carbamoyl phosphate: step 2/3. This is Argininosuccinate synthase from Rhizorhabdus wittichii (strain DSM 6014 / CCUG 31198 / JCM 15750 / NBRC 105917 / EY 4224 / RW1) (Sphingomonas wittichii).